The following is an 869-amino-acid chain: Retrovirus-related Pol polyprotein from type-1 retrotransposable element R2 (869 aa).

The region spanning 199 to 475 (IFVFYGRVPS…DLWKYLGVVY (277 aa)) is the Reverse transcriptase domain. The interval 601–869 (LYASISHSCK…FNNVTTVVHW (269 aa)) is nucleic acid-binding endonuclease.

It carries out the reaction DNA(n) + a 2'-deoxyribonucleoside 5'-triphosphate = DNA(n+1) + diphosphate. This Bradysia coprophila (Dark-winged fungus gnat) protein is Retrovirus-related Pol polyprotein from type-1 retrotransposable element R2.